The primary structure comprises 535 residues: INSYN2B protein (535 aa).

Disordered stretches follow at residues 23-85 (LVKQ…SFPR), 215-346 (EARE…RSSS), and 360-387 (KLPS…PRQE). Positions 46 to 59 (KNPTGVTEVNTQTP) are enriched in polar residues. The segment covering 219 to 232 (SALSPESSAEESNS) has biased composition (low complexity). Composition is skewed to polar residues over residues 258 to 269 (CSNTNSSASNMP), 307 to 319 (RTHS…SRSQ), and 361 to 375 (LPSQ…TGVG). The stretch at 411–448 (DLQGRLQSVEESLHSNQEKIKVLLNVIQDLEKAHALTE) forms a coiled coil. The interval 493-528 (LEEAEPTEEAPSPPKSPAEAPVPEKQDLRRKSKKVK) is disordered.

Belongs to the INSYN2 family.

This chain is INSYN2B protein (Insyn2b), found in Mus musculus (Mouse).